Here is a 2028-residue protein sequence, read N- to C-terminus: Transient receptor potential cation channel subfamily M member 6 (2028 aa).

At 1–747 (MQVKKSWIEG…MWMGRLKMRK (747 aa)) the chain is on the cytoplasmic side. Residues 577 to 601 (QPYKSKEKPEDSQKSKKKSKERQSL) are disordered. Residues 580–590 (KSKEKPEDSQK) show a composition bias toward basic and acidic residues. Residues 748–768 (NSWLKIIISILLPPMILTLEF) form a helical membrane-spanning segment. Residues 769–847 (KSKAEMSHVP…YEFYSAPFVK (79 aa)) are Extracellular-facing. Residues 848–868 (FWFYTMAYLAFLMLFTYTVLV) traverse the membrane as a helical segment. The Cytoplasmic portion of the chain corresponds to 869-910 (EMQPQPSVHEWLVIIYIFTNAIEKVREICISEPSKFKQKVKM). A helical membrane pass occupies residues 911–931 (WLSEYWNLMETVAIGLFAVGF). Residues 932-945 (GLRWGHPPLQTAGR) lie on the Extracellular side of the membrane. A helical transmembrane segment spans residues 946–966 (LIYCIDIIFWFSRLMDFFAVN). Residues 967-978 (QHAGPYVTMIAK) lie on the Cytoplasmic side of the membrane. Residues 979 to 999 (MAANMFYIVIIMAIVLLSFGV) traverse the membrane as a helical segment. Topologically, residues 1000 to 1018 (ARKAILSPKEPPSWRLARD) are extracellular. Positions 1019–1039 (IVFEPYWMMYGEVYASDIDVC) form an intramembrane region, pore-forming. The Extracellular portion of the chain corresponds to 1040–1053 (SNETSCPPGSFLTP). A helical transmembrane segment spans residues 1054–1074 (FLQAVYLFVQYIIMVNLLIAC). At 1075 to 2028 (FNNIYLDIKS…RSSLEDHTRL (954 aa)) the chain is on the cytoplasmic side. 2 stretches are compositionally biased toward basic and acidic residues: residues 1313–1323 (KREASHVREEQ) and 1665–1677 (DHLR…RDKT). 2 disordered regions span residues 1313-1339 (KREA…GISH) and 1658-1694 (RHTT…FLTR). The span at 1682–1694 (SGSTSLSRSFLTR) shows a compositional bias: low complexity. Threonine 1730 is subject to Phosphothreonine; by autocatalysis. In terms of domain architecture, Alpha-type protein kinase spans 1756–1986 (TLDKSMSSWS…CCGKLRLPDL (231 aa)). ADP is bound by residues glycine 1783, glycine 1784, leucine 1785, arginine 1786, and lysine 1810. Threonine 1857 is modified (phosphothreonine; by autocatalysis). Positions 1882 and 1885 each coordinate ADP. Position 1915 (histidine 1915) interacts with Zn(2+). Aspartate 1929 (proton acceptor) is an active-site residue. Aspartate 1939 serves as a coordination point for ADP. Histidine 1972, cysteine 1974, and cysteine 1978 together coordinate Zn(2+). The segment at 2009–2028 (TEELPERDKNRSSLEDHTRL) is disordered. Residues 2012 to 2028 (LPERDKNRSSLEDHTRL) are compositionally biased toward basic and acidic residues.

The protein in the C-terminal section; belongs to the protein kinase superfamily. Alpha-type protein kinase family. ALPK subfamily. In the N-terminal section; belongs to the transient receptor (TC 1.A.4) family. LTrpC subfamily. TRPM6 sub-subfamily. In terms of assembly, forms heteromers with TRPM7; TRPM6 increases the current amplitude of TRPM6/7 heteromers as compared to TRPM7 homomers. Interacts (via kinase domain) with RACK1. In terms of processing, autophosphorylated; autophosphorylation controls the protein kinase activity of TRPM6 towards their substrates. Autophosphorylation of Thr-1857 in the kinase domain is essential for the inhibitory effect of RACK1. Post-translationally, the C-terminus of TRPM6 is proteolytically cleaved in vivo, in a cell type-specific fashion, releasing the kinase module from the transmembrane domain. The cleaved kinase fragments are translocated to the nucleus to phosphorylate histones and regulate gene expression.

It localises to the cell membrane. It is found in the apical cell membrane. Its subcellular location is the nucleus. The enzyme catalyses L-seryl-[protein] + ATP = O-phospho-L-seryl-[protein] + ADP + H(+). It carries out the reaction L-threonyl-[protein] + ATP = O-phospho-L-threonyl-[protein] + ADP + H(+). It catalyses the reaction Mg(2+)(in) = Mg(2+)(out). The catalysed reaction is Ca(2+)(in) = Ca(2+)(out). The enzyme catalyses Zn(2+)(in) = Zn(2+)(out). With respect to regulation, strongly inhibited by intracellular Mg(2+); unlikely to be active at physiological levels of intracellular Mg(2+). In the heteromeric TRPM6-TRPM7 channels complexes, TRPM7 are able to offset the very high sensitivity of TRPM6 to cytosolic Mg(2+) to physiologically relevant concentrations, whereas TRPM6 relieve TRPM7 from the inhibitory action of Mg-ATP. Consequently, the association of TRPM6 with TRPM7 allow for high constitutive activity of TRPM6/7 in the presence of physiological levels of Mg(2+) and Mg-ATP. The kinase activity is controlled through the autophosphorylation of a serine/threonine-rich region located to the N-terminal of the catalytic domain. Bifunctional protein that combines an ion channel with an intrinsic kinase domain, enabling it to modulate cellular functions either by conducting ions through the pore or by phosphorylating downstream proteins via its kinase domain. Crucial for Mg(2+) homeostasis. Has an important role in epithelial magnesium transport and in the active Mg(2+) absorption in the gut and kidney. However, whether TRPM6 forms functional homomeric channels by itself or functions primarily as a subunit of heteromeric TRPM6-TRPM7 channels, is still under debate. Its function is as follows. The C-terminal kinase domain can be cleaved from the channel segment in a cell-type-specific fashion. The cleaved kinase fragments can translocate to the nucleus, and bind chromatin-remodeling complex proteins to ultimately phosphorylate specific Ser/Thr residues of histones known to be functionally important for cell differentiation and development. The sequence is that of Transient receptor potential cation channel subfamily M member 6 (Trpm6) from Mus musculus (Mouse).